A 195-amino-acid polypeptide reads, in one-letter code: Nucleoid occlusion factor SlmA (195 aa).

The 61-residue stretch at 6 to 66 folds into the HTH tetR-type domain; sequence PSRRESILQA…ALIEFAEEAV (61 aa). Residues 29 to 48 constitute a DNA-binding region (H-T-H motif); the sequence is TTAGLAKTVGVTEAALYRHF. Residues 118–138 adopt a coiled-coil conformation; sequence RKRASQFFERLETQIRQALKE.

This sequence belongs to the nucleoid occlusion factor SlmA family. As to quaternary structure, homodimer. Interacts with FtsZ.

The protein localises to the cytoplasm. It localises to the nucleoid. In terms of biological role, required for nucleoid occlusion (NO) phenomenon, which prevents Z-ring formation and cell division over the nucleoid. Acts as a DNA-associated cell division inhibitor that binds simultaneously chromosomal DNA and FtsZ, and disrupts the assembly of FtsZ polymers. SlmA-DNA-binding sequences (SBS) are dispersed on non-Ter regions of the chromosome, preventing FtsZ polymerization at these regions. The protein is Nucleoid occlusion factor SlmA of Marinobacter nauticus (strain ATCC 700491 / DSM 11845 / VT8) (Marinobacter aquaeolei).